The following is a 136-amino-acid chain: Histone H3.3 (136 aa).

A disordered region spans residues 1-43 (MARTKQTARKSTGGKAPRKQLATKAARKSAPSTGGVKKPHRYR). An N6,N6,N6-trimethyllysine; alternate modification is found at K5. K5 carries the N6,N6-dimethyllysine; alternate modification. 2 positions are modified to N6-methyllysine; alternate: K5 and K10. K10 bears the N6-acetyllysine; alternate mark. S11 is modified (phosphoserine). An N6,N6-dimethyllysine; alternate modification is found at K15. N6-acetyllysine; alternate is present on residues K15, K19, K24, K28, and K37. K19, K24, K28, and K37 each carry N6-methyllysine; alternate. K28 and K37 each carry N6,N6,N6-trimethyllysine; alternate. N6,N6-dimethyllysine; alternate is present on residues K28 and K37. K57 and K65 each carry N6-acetyllysine. K80 is modified (N6,N6,N6-trimethyllysine; alternate). The residue at position 80 (K80) is an N6,N6-dimethyllysine; alternate. K80 carries the post-translational modification N6-methyllysine; alternate.

It belongs to the histone H3 family. As to quaternary structure, the nucleosome is a histone octamer containing two molecules each of H2A, H2B, H3 and H4 assembled in one H3-H4 heterotetramer and two H2A-H2B heterodimers. The octamer wraps approximately 147 bp of DNA. Post-translationally, phosphorylated at Ser-11. This is required for transcriptional activation through TBP recruitment to the promoters. Phosphorylation at Ser-11 also promotes subsequent acetylation at Lys-15. Mono-, di- and trimethylation of Lys-5 by the COMPASS complex activates gene expression by regulating transcription elongation and plays a role in telomere length maintenance. Lys-5 methylation enrichment correlates with transcription levels, and occurs in a 5' to 3' gradient with tri-methyl enrichment at the 5'-end of genes, shifting to di-methyl and then mono-methyl. The COMPASS mediated di and trimethylation of Lys-5 requires histone H2B monoubiquitination. Methylation of Lys-37 by SET2 represses gene expression. Methylation of Lys-80 by DOT1 is required for association of SIR proteins with telomeric regions and for telomeric silencing. In terms of processing, acetylation of histone H3 leads to transcriptional activation. Acetylation at Lys-15 is promoted by the phosphorylation at Ser-11. Acetylation at Lys-57 occurs predominantly in newly synthesized H3 molecule during G1, S and G2/M of the cell cycle and may be involved in DNA repair.

The protein localises to the nucleus. Its subcellular location is the chromosome. Its function is as follows. Core component of nucleosome. Nucleosomes wrap and compact DNA into chromatin, limiting DNA accessibility to the cellular machineries which require DNA as a template. Histones thereby play a central role in transcription regulation, DNA repair, DNA replication and chromosomal stability. DNA accessibility is regulated via a complex set of post-translational modifications of histones, also called histone code, and nucleosome remodeling. This chain is Histone H3.3 (HHT3), found in Trichinella pseudospiralis (Parasitic roundworm).